Here is a 291-residue protein sequence, read N- to C-terminus: D-alanyl-D-alanine carboxypeptidase DacB2 (291 aa).

An N-terminal signal peptide occupies residues 1–22 (MRKLMTATAALCACAVTVSAGA). The active-site Acyl-ester intermediate is Ser69. Lys72 serves as the catalytic Proton acceptor. Ser124 is an active-site residue.

The protein belongs to the peptidase S11 family.

The protein resides in the periplasm. It participates in cell wall biogenesis; peptidoglycan biosynthesis. Inhibited by the beta-lactam antibiotic meropenem. Inhibited by the non-specific inhibitor phenylmethylsulfonyl fluoride (PMSF). Its function is as follows. Probably cleaves the terminal D-Ala-D-Ala dipeptide of the peptidoglycan stem peptide. Shows significant D,D-carboxypeptidase activity in vitro. Acts on the synthetic penta-peptide substrate Penta-DAP (L-Ala-gamma-D-Gln-DAP-D-Ala-D-Ala). Also shows weak activity on Penta-Lys (L-Ala-gamma-Glu-L-Lys-D-Ala-D-Ala). The catalytic domain binds weakly to peptidoglycan in vitro. Plays an important role in the maintenance of colony morphology and cell wall permeability and integrity. The polypeptide is D-alanyl-D-alanine carboxypeptidase DacB2 (Mycobacterium tuberculosis (strain ATCC 25618 / H37Rv)).